The sequence spans 264 residues: MKIEAVVFDWAGTTVDYGCFAPLEVFMKIFHKRGVEITAEEARKPMGLLKIDHIRVLTEMPRISNEWKHVFGQLPTEEDIHEMYEEFEEILFAILPYYATPIDGVKEVVSSLRERGIKIGSTTGYTREMMDIVAKEAEIQGYKPDFLVTPNDVPAGRPYPWMCYKNAMELCVYPMNHMIKIGDTVSDMKEGRNAGMWTVGVILGSSELGLTEEEVENMDPLELREKIEVVRNRFIENGAHFTIETMQELENVIEHIEKQELIIS.

The active-site Nucleophile is Asp9. Mg(2+)-binding residues include Asp9 and Ala11. Lys50 acts as the Schiff-base intermediate with substrate in catalysis. Asp183 serves as a coordination point for Mg(2+).

It belongs to the HAD-like hydrolase superfamily. PhnX family. Homodimer. The cofactor is Mg(2+).

It catalyses the reaction phosphonoacetaldehyde + H2O = acetaldehyde + phosphate + H(+). Involved in phosphonate degradation. The chain is Phosphonoacetaldehyde hydrolase from Bacillus mycoides (strain KBAB4) (Bacillus weihenstephanensis).